The following is a 328-amino-acid chain: Cytochrome c biogenesis protein CcsA (328 aa).

8 helical membrane passes run 13–33 (ISFSVVSIVMTIYFLTLLVNL), 46–66 (GIIITFFSITGFLFTRWIFSG), 73–93 (LYESLIFLSWAFSIIHMISFF), 101–121 (LNAITAPSAIFIQGFATSGLL), 146–166 (MVLGYGALLCGSLLSIALLVI), 234–254 (IISLGFLFLTIGILSGAVWAN), 263–283 (WDPKETWAFITWTIFAIYLHI), and 295–315 (AIVASIGFLVIWICYFGVNLL).

The protein belongs to the CcmF/CycK/Ccl1/NrfE/CcsA family. As to quaternary structure, may interact with Ccs1.

The protein resides in the plastid. It is found in the chloroplast thylakoid membrane. In terms of biological role, required during biogenesis of c-type cytochromes (cytochrome c6 and cytochrome f) at the step of heme attachment. This chain is Cytochrome c biogenesis protein CcsA, found in Aethionema grandiflorum (Persian stone-cress).